Here is a 287-residue protein sequence, read N- to C-terminus: Putative ABC transporter ATP-binding protein MM_1038 (287 aa).

The 234-residue stretch at 5–238 (LENISVFYSR…ENVPLPPVAS (234 aa)) folds into the ABC transporter domain. Residue 40–47 (GEKGAGKS) participates in ATP binding.

It belongs to the ABC transporter superfamily.

The protein localises to the cell membrane. Its function is as follows. Probably part of an ABC transporter complex. Responsible for energy coupling to the transport system. This chain is Putative ABC transporter ATP-binding protein MM_1038, found in Methanosarcina mazei (strain ATCC BAA-159 / DSM 3647 / Goe1 / Go1 / JCM 11833 / OCM 88) (Methanosarcina frisia).